A 702-amino-acid chain; its full sequence is K(+)-insensitive pyrophosphate-energized proton pump (702 aa).

Transmembrane regions (helical) follow at residues 3–23 (GIYL…ALTI), 63–83 (AVVF…GFLI), 130–150 (MLVA…LVGI), and 162–182 (VALG…GGIF). K184 lines the substrate pocket. Residues D187, D191, N214, and D217 each coordinate Mg(2+). Transmembrane regions (helical) follow at residues 234-254 (AVTV…VPAM), 255-275 (TSMM…SILG), 294-314 (GFLV…AIVP), 329-349 (GFDL…LIWV), 379-399 (GLAI…AAII), and 407-427 (LFGI…VVAL). D435 is a binding site for Mg(2+). 4 helical membrane passes run 466–486 (AVTK…LFAA), 517–537 (YVVV…SMGM), 586–606 (IIPS…ILGI), and 612–632 (AFSA…FVAI). D642, D668, and D672 together coordinate Ca(2+). K675 contributes to the substrate binding site.

Belongs to the H(+)-translocating pyrophosphatase (TC 3.A.10) family. K(+)-insensitive subfamily. In terms of assembly, homodimer. The cofactor is Mg(2+).

The protein resides in the cell inner membrane. The enzyme catalyses diphosphate + H2O + H(+)(in) = 2 phosphate + 2 H(+)(out). Its function is as follows. Proton pump that utilizes the energy of pyrophosphate hydrolysis as the driving force for proton movement across the membrane. Generates a proton motive force. This Rhodospirillum rubrum (strain ATCC 11170 / ATH 1.1.1 / DSM 467 / LMG 4362 / NCIMB 8255 / S1) protein is K(+)-insensitive pyrophosphate-energized proton pump.